A 400-amino-acid chain; its full sequence is MGGWSSKPRKGMGTNLSVPNPLGFFPDHQLDPAFKANSENPDWDLNPHKDNWPDAHKVGVGAFGPGFTPPHGGLLGWSPQAQGILTSVPAAPPPASTNRQSGRQPTPLSPPLRDTHPQAMQWNSTTFHQTLQDPRVRALYLPAGGSSSGTVSPAQNTVSAISSILSTTGDPVPNMENIASGLLGPLLVLQAGFFSLTKILTIPQSLDSWWTSLSFLGGTPVCLGQNSQSPISSHSPTCCPPICPGYRWMYLRRFIIXLCILLLCLIFLLVLLDYQGMLPVCPLIPGSSTTSTGPCKTCTTPAQGTSMFPSCCCTKPTDGNCTCIPIPSSWAFAKYLWEWASVRFSWLSLLVPFVQWFVGLSPTVWLSVIWMMWYWGPSLYNILSPFMPLLPIFFCLWVYI.

Met-1 is modified (N-acetylmethionine). Disordered regions lie at residues 1 to 50 (MGGW…PHKD) and 84 to 116 (ILTSVPAAPPPASTNRQSGRQPTPLSPPLRDTH). The N-myristoyl glycine; by host moiety is linked to residue Gly-2. The tract at residues 2 to 119 (GGWSSKPRKG…PPLRDTHPQA (118 aa)) is pre-S1. The tract at residues 2 to 174 (GGWSSKPRKG…LSTTGDPVPN (173 aa)) is pre-S. At 2–181 (GGWSSKPRKG…VPNMENIASG (180 aa)) the chain is on the virion surface; in external conformation side. The Intravirion; in internal conformation portion of the chain corresponds to 2 to 253 (GGWSSKPRKG…PGYRWMYLRR (252 aa)). Trp-4 carries N-linked (GlcNAc...) asparagine glycosylation. Over residues 96–106 (STNRQSGRQPT) the composition is skewed to polar residues. Residues 120-174 (MQWNSTTFHQTLQDPRVRALYLPAGGSSSGTVSPAQNTVSAISSILSTTGDPVPN) form a pre-S2 region. The helical transmembrane segment at 182–202 (LLGPLLVLQAGFFSLTKILTI) threads the bilayer. Over 203–253 (PQSLDSWWTSLSFLGGTPVCLGQNSQSPISSHSPTCCPPICPGYRWMYLRR) the chain is Intravirion; in external conformation. The chain crosses the membrane as a helical span at residues 254-274 (FIIXLCILLLCLIFLLVLLDY). Over 275–348 (QGMLPVCPLI…WASVRFSWLS (74 aa)) the chain is Virion surface. An N-linked (GlcNAc...) asparagine; by host glycan is attached at Asn-320. Residues 349-369 (LLVPFVQWFVGLSPTVWLSVI) form a helical membrane-spanning segment. Residues 370–375 (WMMWYW) lie on the Intravirion side of the membrane. The helical transmembrane segment at 376–398 (GPSLYNILSPFMPLLPIFFCLWV) threads the bilayer. Topologically, residues 399-400 (YI) are virion surface.

It belongs to the orthohepadnavirus major surface antigen family. Interacts (via its myristoylated pre-S1 region) with the host SLC10A1/NTCP; this interaction is essential for viral entry. In terms of assembly, in its internal form (Li-HBsAg), interacts with the capsid protein and with the isoform S. Interacts with host chaperone CANX. As to quaternary structure, associates with host chaperone CANX through its pre-S2 N glycan; this association may be essential for isoform M proper secretion. Interacts with isoform L. Interacts with the antigens of satellite virus HDV (HDVAgs); this interaction is required for encapsidation of HDV genomic RNA. In terms of processing, isoform M is N-terminally acetylated by host at a ratio of 90%, and N-glycosylated by host at the pre-S2 region. Myristoylated; this modification is essential for its interaction with the host protein SLC10A1/NTCP.

The protein localises to the virion membrane. Functionally, the large envelope protein exists in two topological conformations, one which is termed 'external' or Le-HBsAg and the other 'internal' or Li-HBsAg. In its external conformation the protein attaches the virus to cell receptors and thereby initiating infection. This interaction determines the species specificity and liver tropism. This attachment induces virion internalization predominantly through caveolin-mediated endocytosis. The large envelope protein also assures fusion between virion membrane and endosomal membrane. In its internal conformation the protein plays a role in virion morphogenesis and mediates the contact with the nucleocapsid like a matrix protein. Its function is as follows. The middle envelope protein plays an important role in the budding of the virion. It is involved in the induction of budding in a nucleocapsid independent way. In this process the majority of envelope proteins bud to form subviral lipoprotein particles of 22 nm of diameter that do not contain a nucleocapsid. The sequence is that of Large envelope protein from Hepatitis B virus genotype B1 (isolate Japan/Ry30/2002) (HBV-B).